Consider the following 212-residue polypeptide: Ependymin (212 aa).

The first 20 residues, 1 to 20 (MRLTGLLCVALWSASAVVLA), serve as a signal peptide directing secretion. N-linked (GlcNAc...) asparagine glycans are attached at residues asparagine 69, asparagine 92, and asparagine 112.

This sequence belongs to the ependymin family. In terms of assembly, forms disulfide-linked dimers. Binds calcium through the terminal sialic acids. As to expression, EPDs are synthesized in the meninx and secreted in the cerebrospinal fluid.

Its subcellular location is the secreted. May play a role in neural plasticity. May be involved during axon regeneration. This is Ependymin (epd) from Clupea harengus (Atlantic herring).